We begin with the raw amino-acid sequence, 152 residues long: SsrA-binding protein (152 aa).

This sequence belongs to the SmpB family.

Its subcellular location is the cytoplasm. Its function is as follows. Required for rescue of stalled ribosomes mediated by trans-translation. Binds to transfer-messenger RNA (tmRNA), required for stable association of tmRNA with ribosomes. tmRNA and SmpB together mimic tRNA shape, replacing the anticodon stem-loop with SmpB. tmRNA is encoded by the ssrA gene; the 2 termini fold to resemble tRNA(Ala) and it encodes a 'tag peptide', a short internal open reading frame. During trans-translation Ala-aminoacylated tmRNA acts like a tRNA, entering the A-site of stalled ribosomes, displacing the stalled mRNA. The ribosome then switches to translate the ORF on the tmRNA; the nascent peptide is terminated with the 'tag peptide' encoded by the tmRNA and targeted for degradation. The ribosome is freed to recommence translation, which seems to be the essential function of trans-translation. The polypeptide is SsrA-binding protein (Rickettsia massiliae (strain Mtu5)).